The primary structure comprises 662 residues: Probable dolichyl-phosphate-mannose--protein mannosyltransferase 7 (662 aa).

The Lumenal portion of the chain corresponds to 1–26 (MKDLRLQGPYRKYIPYNIFQQCGIGH). The helical transmembrane segment at 27–47 (LKTLDYIFAFLIVITNFTLIW) threads the bilayer. Residues 48-159 (KSHSSSFWNR…GTIISFDSLE (112 aa)) lie on the Cytoplasmic side of the membrane. Residues 160–180 (WCLFSVVIYSFISISIAKLGT) form a helical membrane-spanning segment. Topologically, residues 181–195 (TNWFANVITLSISLG) are lumenal. Residues 196-216 (LAISSKFIGIVTWAFVILSFV) form a helical membrane-spanning segment. The Cytoplasmic portion of the chain corresponds to 217 to 235 (RQFDRLISDVKVTTIQIIK). A helical transmembrane segment spans residues 236 to 256 (FVILCLLFVLIIPGSIFIISY). Over 257–482 (SNLLSNFKTD…MEYPVIPRTT (226 aa)) the chain is Lumenal. The MIR 1 domain maps to 289-344 (PSRLYYGSTITLRHLDSMVGYLASHDISYPSDVDEQLVALSFEEFAADNEWLIEHP). Residue Asn347 is glycosylated (N-linked (GlcNAc...) asparagine). MIR domains are found at residues 359–418 (LIPV…VLLI) and 432–488 (DKYI…IDSV). Residues 483–503 (FLIDSVQLPVDFQVPMIEYYI) form a helical membrane-spanning segment. Over 504–565 (GKISSSAEFN…KWPITLDTDS (62 aa)) the chain is Cytoplasmic. The chain crosses the membrane as a helical span at residues 566-586 (PVWFNFAWYGSLLSMIIFMCV). Over 587–617 (QCKRMISWNPWTTAEPSFSIKWEVYNEFGWE) the chain is Lumenal. The helical transmembrane segment at 618-638 (CIVGWFLHFYIFTMSPHFNLG) threads the bilayer. Over 639 to 662 (KKLYFQSFFFSVLCLLESLDCLAK) the chain is Cytoplasmic.

This sequence belongs to the glycosyltransferase 39 family.

The protein localises to the endoplasmic reticulum membrane. The enzyme catalyses a di-trans,poly-cis-dolichyl beta-D-mannosyl phosphate + L-seryl-[protein] = 3-O-(alpha-D-mannosyl)-L-seryl-[protein] + a di-trans,poly-cis-dolichyl phosphate + H(+). It catalyses the reaction a di-trans,poly-cis-dolichyl beta-D-mannosyl phosphate + L-threonyl-[protein] = 3-O-(alpha-D-mannosyl)-L-threonyl-[protein] + a di-trans,poly-cis-dolichyl phosphate + H(+). It functions in the pathway protein modification; protein glycosylation. Its function is as follows. Probable protein O-mannosyltransferase involved in O-glycosylation which is essential for cell wall rigidity. Transfers mannose from Dol-P-mannose to Ser or Thr residues on proteins. The chain is Probable dolichyl-phosphate-mannose--protein mannosyltransferase 7 from Saccharomyces cerevisiae (strain ATCC 204508 / S288c) (Baker's yeast).